The following is a 145-amino-acid chain: Arginine repressor (145 aa).

Belongs to the ArgR family.

Its subcellular location is the cytoplasm. Its pathway is amino-acid biosynthesis; L-arginine biosynthesis [regulation]. Its function is as follows. Regulates arginine biosynthesis genes. This is Arginine repressor from Streptococcus pyogenes serotype M3 (strain ATCC BAA-595 / MGAS315).